A 196-amino-acid chain; its full sequence is Na(+)-translocating ferredoxin:NAD(+) oxidoreductase complex subunit E (196 aa).

5 helical membrane-spanning segments follow: residues 38 to 58 (MGMG…ISAL), 68 to 88 (IPAF…LMKA), 92 to 112 (ALDA…IILA), 127 to 147 (FADA…LGSI), and 169 to 189 (VLLM…IGLI).

Belongs to the NqrDE/RnfAE family. In terms of assembly, the complex is composed of six subunits: RnfA, RnfB, RnfC, RnfD, RnfE and RnfG.

The protein resides in the cell membrane. It carries out the reaction 2 reduced [2Fe-2S]-[ferredoxin] + Na(+)(in) + NAD(+) + H(+) = 2 oxidized [2Fe-2S]-[ferredoxin] + Na(+)(out) + NADH. In terms of biological role, part of a membrane-bound complex that couples electron transfer with translocation of ions across the membrane. Couples electron transfer from reduced ferredoxin to NAD(+) with electrogenic movement of Na(+) out of the cell. Involved in caffeate respiration. This is Na(+)-translocating ferredoxin:NAD(+) oxidoreductase complex subunit E from Acetobacterium woodii (strain ATCC 29683 / DSM 1030 / JCM 2381 / KCTC 1655 / WB1).